Consider the following 202-residue polypeptide: Oocyte-secreted protein 1 (202 aa).

The N-terminal stretch at Met1 to Ala21 is a signal peptide. Positions Gln157 to Ala183 are disordered.

This sequence belongs to the PLAC1 family. In terms of tissue distribution, expressed in oocytes in primary through antral-stage follicles. Expressed in liver and ovary.

The protein localises to the secreted. Functionally, may be involved in cell differentiation. This chain is Oocyte-secreted protein 1 (Oosp1), found in Mus musculus (Mouse).